Reading from the N-terminus, the 352-residue chain is Mitochondrial hydrolase YKR070W (352 aa).

The protein belongs to the HAD-like hydrolase superfamily.

The protein resides in the mitochondrion. The polypeptide is Mitochondrial hydrolase YKR070W (Saccharomyces cerevisiae (strain ATCC 204508 / S288c) (Baker's yeast)).